The following is a 275-amino-acid chain: MNINYWLKKAIKKLSHCENPRYEAEILLSHVLKCTRIAIIINQEIDLSKEQYQKLNNFIYRRSIGEPIAYIIGKKEFWSLSLCVSYKTLIPRPDTEILVEKILSKVNKNFRSILDLGTGSGAIALALASVCSHWNIIGVDNSYSALKIAKINGLKLNLKNVEFFYSNWFSHINEKFHIIVSNPPYIGIKEIQSLKKDIFYEPFNALISKKDGLLDIELIIQKASQYLFDKGWLFIEHGWKQKLKVQYFFKKYNFFCIQSFKDYGGNDRITFGQKK.

S-adenosyl-L-methionine is bound by residues 117-121, Asp140, Trp168, and Asn182; that span reads GTGSG. 182 to 185 is a binding site for substrate; it reads NPPY.

The protein belongs to the protein N5-glutamine methyltransferase family. PrmC subfamily.

It catalyses the reaction L-glutaminyl-[peptide chain release factor] + S-adenosyl-L-methionine = N(5)-methyl-L-glutaminyl-[peptide chain release factor] + S-adenosyl-L-homocysteine + H(+). Its function is as follows. Methylates the class 1 translation termination release factors RF1/PrfA and RF2/PrfB on the glutamine residue of the universally conserved GGQ motif. The chain is Release factor glutamine methyltransferase from Buchnera aphidicola subsp. Schizaphis graminum (strain Sg).